The primary structure comprises 124 residues: Large ribosomal subunit protein bL12 (124 aa).

The tract at residues 99-124 (KEGMNKEDAEKAKADLEAAGAKVELK) is disordered. A compositionally biased stretch (basic and acidic residues) spans 101–114 (GMNKEDAEKAKADL). Positions 115-124 (EAAGAKVELK) are enriched in low complexity.

This sequence belongs to the bacterial ribosomal protein bL12 family. As to quaternary structure, homodimer. Part of the ribosomal stalk of the 50S ribosomal subunit. Forms a multimeric L10(L12)X complex, where L10 forms an elongated spine to which 2 to 4 L12 dimers bind in a sequential fashion. Binds GTP-bound translation factors.

In terms of biological role, forms part of the ribosomal stalk which helps the ribosome interact with GTP-bound translation factors. Is thus essential for accurate translation. This is Large ribosomal subunit protein bL12 from Campylobacter hominis (strain ATCC BAA-381 / DSM 21671 / CCUG 45161 / LMG 19568 / NCTC 13146 / CH001A).